The chain runs to 501 residues: Carotenoid cleavage oxygenase (501 aa).

Fe cation-binding residues include H162, H211, H314, and H494.

Belongs to the carotenoid oxygenase family. Fe(2+) is required as a cofactor.

Its function is as follows. Catalyzes the oxidative cleavage of several carotenoids and apocarotenoids in vitro. This is Carotenoid cleavage oxygenase from Mycobacterium tuberculosis (strain CDC 1551 / Oshkosh).